The sequence spans 419 residues: LanC-like protein 3 homolog (419 aa).

The protein belongs to the LanC-like protein family.

This is LanC-like protein 3 homolog from Drosophila melanogaster (Fruit fly).